A 153-amino-acid chain; its full sequence is Cytochrome c-type biogenesis protein CcmE (153 aa).

Residues 1–8 are Cytoplasmic-facing; that stretch reads MTPVQRRR. Residues 9–29 traverse the membrane as a helical; Signal-anchor for type II membrane protein segment; it reads LAWVLLALLASGLATALVAMA. Topologically, residues 30–153 are extracellular; that stretch reads LERNIAYLYT…DVPVTAPEVR (124 aa). Heme contacts are provided by His123 and Tyr127.

The protein belongs to the CcmE/CycJ family.

It localises to the cell membrane. Heme chaperone required for the biogenesis of c-type cytochromes. Transiently binds heme delivered by CcmC and transfers the heme to apo-cytochromes in a process facilitated by CcmF and CcmH. The polypeptide is Cytochrome c-type biogenesis protein CcmE (Stenotrophomonas maltophilia (strain K279a)).